Here is a 1268-residue protein sequence, read N- to C-terminus: SR-related and CTD-associated factor 8 (1268 aa).

One can recognise a CID domain in the interval 1-139 (MEAVKTFNSE…PLLDMAAGIP (139 aa)). Thr6 is modified (phosphothreonine). A Glycyl lysine isopeptide (Lys-Gly) (interchain with G-Cter in SUMO1) cross-link involves residue Lys18. The span at 270 to 283 (GEDSEHSEESKKEM) shows a compositional bias: basic and acidic residues. 3 disordered regions span residues 270–290 (GEDS…QLSH), 322–355 (QQQP…QQHF), and 385–469 (EIFE…PVRS). The residue at position 273 (Ser273) is a Phosphoserine. Polar residues predominate over residues 327–354 (KVTPQDSQEGTFGSEHSASPSQGSSQQH). Basic residues predominate over residues 394-443 (VAVRSRSRTHSRSRSRSPRKRRSRSRSGSRKRKHRKRSRSHSREKKRKAS). Residues 447–461 (SSERRAREREKERQK) show a composition bias toward basic and acidic residues. One can recognise an RRM domain in the interval 477–551 (TTLWVGQVDK…KVIKIAWALN (75 aa)). Residue Ser617 is modified to Phosphoserine. The tract at residues 776-807 (QIPSGENTRPVIPSDIPSSAAMLAQPPGASST) is disordered. Residues Arg915, Arg925, and Arg936 each carry the asymmetric dimethylarginine modification. 2 disordered regions span residues 984–1012 (PGRP…EGDR) and 1040–1065 (RLDP…PVDM). Residue Arg1071 is modified to Asymmetric dimethylarginine. Residues 1199–1268 (ATSQRKGDNV…VVESTETEGT (70 aa)) are disordered. The segment covering 1249–1262 (GTVAGVESEAVVES) has biased composition (low complexity).

Interacts with POLR2A; via C-terminal heptapeptide repeat domain (CTD) phosphorylated at 'Ser-2' and 'Ser-5'. Identified in a complex with CDC5L and other spliceosomal proteins.

It localises to the nucleus. The protein resides in the nucleus matrix. Functionally, anti-terminator protein required to prevent early mRNA termination during transcription. Together with SCAF4, acts by suppressing the use of early, alternative poly(A) sites, thereby preventing the accumulation of non-functional truncated proteins. Mechanistically, associates with the phosphorylated C-terminal heptapeptide repeat domain (CTD) of the largest RNA polymerase II subunit (POLR2A), and subsequently binds nascent RNA upstream of early polyadenylation sites to prevent premature mRNA transcript cleavage and polyadenylation. Independently of SCAF4, also acts as a positive regulator of transcript elongation. This Mus musculus (Mouse) protein is SR-related and CTD-associated factor 8.